The following is a 504-amino-acid chain: Xylose import ATP-binding protein XylG (504 aa).

2 consecutive ABC transporter domains span residues 6 to 243 (LEMK…VGRE) and 260 to 504 (LKVD…TGGK). 38-45 (GENGAGKS) provides a ligand contact to ATP.

Belongs to the ABC transporter superfamily. Xylose importer (TC 3.A.1.2.4) family. As to quaternary structure, the complex is composed of two ATP-binding proteins (XylG), two transmembrane proteins (XylH) and a solute-binding protein (XylF).

Its subcellular location is the cell membrane. It carries out the reaction D-xylose(out) + ATP + H2O = D-xylose(in) + ADP + phosphate + H(+). Its function is as follows. Part of the ABC transporter complex XylFGH involved in xylose import. Responsible for energy coupling to the transport system. The protein is Xylose import ATP-binding protein XylG of Geobacillus kaustophilus (strain HTA426).